The following is a 340-amino-acid chain: Phosphoribosylformylglycinamidine cyclo-ligase (340 aa).

The protein belongs to the AIR synthase family.

It is found in the cytoplasm. The enzyme catalyses 2-formamido-N(1)-(5-O-phospho-beta-D-ribosyl)acetamidine + ATP = 5-amino-1-(5-phospho-beta-D-ribosyl)imidazole + ADP + phosphate + H(+). It functions in the pathway purine metabolism; IMP biosynthesis via de novo pathway; 5-amino-1-(5-phospho-D-ribosyl)imidazole from N(2)-formyl-N(1)-(5-phospho-D-ribosyl)glycinamide: step 2/2. The sequence is that of Phosphoribosylformylglycinamidine cyclo-ligase from Streptococcus agalactiae serotype V (strain ATCC BAA-611 / 2603 V/R).